A 174-amino-acid polypeptide reads, in one-letter code: UPF0340 protein SAB1998c (174 aa).

It belongs to the UPF0340 family.

This Staphylococcus aureus (strain bovine RF122 / ET3-1) protein is UPF0340 protein SAB1998c.